Reading from the N-terminus, the 525-residue chain is Mitochondrial-processing peptidase subunit alpha (525 aa).

The transit peptide at 1–33 directs the protein to the mitochondrion; that stretch reads MAAVVLAATRLLRGSGSWGCSRLRFGPPAYRRF. Lys64 is modified (N6-succinyllysine). Lys299 carries the post-translational modification N6-acetyllysine.

Belongs to the peptidase M16 family. In terms of assembly, heterodimer of PMPCA (alpha) and PMPCB (beta) subunits, forming the mitochondrial processing protease (MPP) in which PMPCA is involved in substrate recognition and binding and PMPCB is the catalytic subunit.

It localises to the mitochondrion matrix. Its subcellular location is the mitochondrion inner membrane. Substrate recognition and binding subunit of the essential mitochondrial processing protease (MPP), which cleaves the mitochondrial sequence off newly imported precursors proteins. The polypeptide is Mitochondrial-processing peptidase subunit alpha (PMPCA) (Pongo abelii (Sumatran orangutan)).